We begin with the raw amino-acid sequence, 753 residues long: 5-methyltetrahydropteroyltriglutamate--homocysteine methyltransferase (753 aa).

5-methyltetrahydropteroyltri-L-glutamate is bound by residues 17-20 (RELK) and lysine 117. L-homocysteine is bound by residues 431 to 433 (IGS) and glutamate 484. Residues 431-433 (IGS) and glutamate 484 each bind L-methionine. 5-methyltetrahydropteroyltri-L-glutamate-binding positions include 515-516 (RC) and tryptophan 561. Aspartate 599 contributes to the L-homocysteine binding site. Aspartate 599 contributes to the L-methionine binding site. Glutamate 605 serves as a coordination point for 5-methyltetrahydropteroyltri-L-glutamate. Residues histidine 641, cysteine 643, and glutamate 665 each contribute to the Zn(2+) site. Histidine 694 functions as the Proton donor in the catalytic mechanism. Cysteine 726 lines the Zn(2+) pocket.

Belongs to the vitamin-B12 independent methionine synthase family. The cofactor is Zn(2+).

The enzyme catalyses 5-methyltetrahydropteroyltri-L-glutamate + L-homocysteine = tetrahydropteroyltri-L-glutamate + L-methionine. The protein operates within amino-acid biosynthesis; L-methionine biosynthesis via de novo pathway; L-methionine from L-homocysteine (MetE route): step 1/1. Catalyzes the transfer of a methyl group from 5-methyltetrahydrofolate to homocysteine resulting in methionine formation. This Escherichia coli O6:H1 (strain CFT073 / ATCC 700928 / UPEC) protein is 5-methyltetrahydropteroyltriglutamate--homocysteine methyltransferase.